We begin with the raw amino-acid sequence, 735 residues long: Zinc finger CCCH domain-containing protein 14 (735 aa).

Residue Met1 is modified to N-acetylmethionine. Residues Thr78–Thr153 form a disordered region. Phosphoserine is present on Ser85. Residues Lys99, Lys139, Lys175, and Lys198 each participate in a glycyl lysine isopeptide (Lys-Gly) (interchain with G-Cter in SUMO2) cross-link. Residues Val131–Arg144 are compositionally biased toward polar residues. Ser240 carries the phosphoserine modification. Residues Lys245, Lys283, and Lys295 each participate in a glycyl lysine isopeptide (Lys-Gly) (interchain with G-Cter in SUMO2) cross-link. Residues Phe308–Asn351 form a disordered region. 3 positions are modified to phosphoserine: Ser309, Ser327, and Ser343. Lys357 carries the N6-acetyllysine; alternate modification. Lys357 is covalently cross-linked (Glycyl lysine isopeptide (Lys-Gly) (interchain with G-Cter in SUMO2); alternate). Lys378 is covalently cross-linked (Glycyl lysine isopeptide (Lys-Gly) (interchain with G-Cter in SUMO2)). A phosphoserine mark is found at Ser390 and Ser409. The tract at residues Val399–Arg431 is disordered. The span at Val412 to Asn421 shows a compositional bias: basic and acidic residues. Residue Lys413 forms a Glycyl lysine isopeptide (Lys-Gly) (interchain with G-Cter in SUMO2) linkage. Residues Thr422–Arg431 show a composition bias toward polar residues. Lys489 is covalently cross-linked (Glycyl lysine isopeptide (Lys-Gly) (interchain with G-Cter in SUMO2)). Residues Ser498, Ser515, Ser527, and Ser620 each carry the phosphoserine modification. 5 C3H1-type zinc fingers span residues Glu595–Ser620, Pro621–Asn640, Cys641–His656, Cys681–Lys698, and Cys700–Ile718.

Belongs to the ZC3H14 family. In terms of assembly, homodimer; facilitating circular RNAs (circRNAs) formation. Associates with the spliceosome. Interacts with HOOK2. Interacts with ZFC3H1 in a RNase-sensitive manner. Expressed in hippocampal pyramidal neurons (at protein level). Expressed in kidney, liver, muscle, heart brain and testes. Expressed in hippocampal pyramidal neurons.

It localises to the nucleus speckle. RNA-binding protein involved in the biogenesis of circular RNAs (circRNAs), which are produced by back-splicing circularization of pre-mRNAs. Acts by binding to both exon-intron boundary and 3'-UTR of pre-mRNAs to promote circRNA biogenesis through dimerization and the association with the spliceosome. Required for spermatogenesis via involvement in circRNA biogenesis. Regulates the pre-mRNA processing of ATP5MC1; preventing its degradation. Also binds the poly(A) tail of mRNAs; controlling poly(A) length in neuronal cells. This is Zinc finger CCCH domain-containing protein 14 from Mus musculus (Mouse).